A 100-amino-acid chain; its full sequence is Urease subunit gamma (100 aa).

Belongs to the urease gamma subunit family. Heterotrimer of UreA (gamma), UreB (beta) and UreC (alpha) subunits. Three heterotrimers associate to form the active enzyme.

The protein resides in the cytoplasm. The enzyme catalyses urea + 2 H2O + H(+) = hydrogencarbonate + 2 NH4(+). It participates in nitrogen metabolism; urea degradation; CO(2) and NH(3) from urea (urease route): step 1/1. This is Urease subunit gamma from Nitrosococcus oceani (strain ATCC 19707 / BCRC 17464 / JCM 30415 / NCIMB 11848 / C-107).